The chain runs to 673 residues: MSGKVEINEPLIVATSAPLRCNCTGGSHFHGKTIANRALGSSQLMKCYSGLLKRCVRREKYIPVSDRGFLDAYTPQTAPGIVFTGSSLVTDSTLMMAPFNFHRQHVLPLEENFGLERARGDVTVDIRTDTDEAVARGLRSDMYERDAVGHIVSKPQKRTTGEMLDELMMTARLSHGNLVRFLGGVACEETRGGKITVKMVELGLCNLDEFIAEPHWIAPKFAIVRQYTLCKLERDTLSGLEYLHMHGVVHGDFRGAKVIVFPTADDFTFKVNLGESTSLGIAPALSRAPYHRAPETEFTGLIGREADMWAWALTMYRAHTCKDFFKKGDPSEPYRVLGPMDNDALDSRRTGRDGDPVNPEGFGTRLEKNATAVDGGFIGLMGKCLALYPQFRPTARELLVYPRYATLHRISGPGPAPPPVIGAAPAVRVVSNAVEFRSRWGVRPSPAMDPRLEARTSWGKNAVRAVGDFTPSFLYREGGLGDTRPGNKRAITLSRGTLRSYVGTENRLTTEIHRSGGADIVLHKVVGRRPDISRANLEYVMKVSNGFPEWYITIDHYTVGVTNVHLYVGYITDDIVYASAIGLSCPLRVDILKGFEKSTLRVDLMGILVTRGLAYTLRVIRHLKSASIYEAGPHAVGLVFVNPSSRNRFGTVSCDSVKLELGDEPSQLITGSR.

The region spanning 128–404 is the Protein kinase domain; it reads TDTDEAVARG…ARELLVYPRY (277 aa). Asp252 functions as the Proton acceptor in the catalytic mechanism. A disordered region spans residues 340 to 364; sequence MDNDALDSRRTGRDGDPVNPEGFGT. The segment covering 345–355 has biased composition (basic and acidic residues); that stretch reads LDSRRTGRDGD.

This sequence belongs to the protein kinase superfamily. Ser/Thr protein kinase family.

It carries out the reaction L-seryl-[protein] + ATP = O-phospho-L-seryl-[protein] + ADP + H(+). The enzyme catalyses L-threonyl-[protein] + ATP = O-phospho-L-threonyl-[protein] + ADP + H(+). The chain is Protein kinase ORF74 (ORF74) from Ictalurid herpesvirus 1 (strain Auburn) (IcHV-1).